Consider the following 34-residue polypeptide: Calcitonin-like peptide 2 (34 aa).

Cys2 and Cys7 are oxidised to a cystine. A Phenylalanine amide modification is found at Phe34.

This Odorrana schmackeri (Schmacker's frog) protein is Calcitonin-like peptide 2.